Reading from the N-terminus, the 101-residue chain is Urease subunit beta (101 aa).

It belongs to the urease beta subunit family. In terms of assembly, heterotrimer of UreA (gamma), UreB (beta) and UreC (alpha) subunits. Three heterotrimers associate to form the active enzyme.

It localises to the cytoplasm. It carries out the reaction urea + 2 H2O + H(+) = hydrogencarbonate + 2 NH4(+). It functions in the pathway nitrogen metabolism; urea degradation; CO(2) and NH(3) from urea (urease route): step 1/1. The polypeptide is Urease subunit beta (Paraburkholderia phytofirmans (strain DSM 17436 / LMG 22146 / PsJN) (Burkholderia phytofirmans)).